Here is a 659-residue protein sequence, read N- to C-terminus: Tail sheath protein (659 aa).

The protein belongs to the myoviridae tail sheath protein family. Hexamer.

Its subcellular location is the virion. Structural component of the bacteriophage tail which consists of a contractile sheath, a tube and a baseplate. The central cylindrical segment of the tail consists of a rigid tube, composed of multiple copies of gp19, surrounded by the outer contractile sheath assembled from gp18 subunits. A total of 138 copies of gp18 arranged into 23 hexameric rings constitutes the sheath. During infection, contraction of the sheath drives the central tube through the host outer membrane, creating a channel for DNA ejection from the capsid into the host cell. In Escherichia coli (Bacteriophage T4), this protein is Tail sheath protein (18).